A 131-amino-acid polypeptide reads, in one-letter code: Small ribosomal subunit protein uS11 (131 aa).

It belongs to the universal ribosomal protein uS11 family. In terms of assembly, part of the 30S ribosomal subunit. Interacts with proteins S7 and S18. Binds to IF-3.

Located on the platform of the 30S subunit, it bridges several disparate RNA helices of the 16S rRNA. Forms part of the Shine-Dalgarno cleft in the 70S ribosome. The protein is Small ribosomal subunit protein uS11 of Helicobacter pylori (strain P12).